Reading from the N-terminus, the 304-residue chain is tRNA dimethylallyltransferase (304 aa).

Residue 2–9 participates in ATP binding; the sequence is GPTASGKT. Residue 4 to 9 participates in substrate binding; that stretch reads TASGKT. Interaction with substrate tRNA stretches follow at residues 27–30, 151–155, 232–237, and 265–272; these read DSAL, QRINR, RCVGYR, and KRQITWLR.

Belongs to the IPP transferase family. Monomer. It depends on Mg(2+) as a cofactor.

It catalyses the reaction adenosine(37) in tRNA + dimethylallyl diphosphate = N(6)-dimethylallyladenosine(37) in tRNA + diphosphate. Functionally, catalyzes the transfer of a dimethylallyl group onto the adenine at position 37 in tRNAs that read codons beginning with uridine, leading to the formation of N6-(dimethylallyl)adenosine (i(6)A). This Actinobacillus pleuropneumoniae serotype 7 (strain AP76) protein is tRNA dimethylallyltransferase.